The chain runs to 151 residues: Large-conductance mechanosensitive channel (151 aa).

Helical transmembrane passes span 12–32 (GNIVDLAVAVVIGTAFTALVT) and 71–91 (VLLSAAINFFLIAFAVYFLVV). Residues 122–151 (AQTNGDSPGRHGGRGTPSPTDGPRASTESQ) form a disordered region.

The protein belongs to the MscL family. Homopentamer.

The protein localises to the cell membrane. In terms of biological role, channel that opens in response to stretch forces in the membrane lipid bilayer. May participate in the regulation of osmotic pressure changes within the cell. The chain is Large-conductance mechanosensitive channel from Mycobacterium tuberculosis (strain CDC 1551 / Oshkosh).